Here is a 468-residue protein sequence, read N- to C-terminus: Phenylalanine--tRNA ligase alpha subunit (468 aa).

L-phenylalanine contacts are provided by residues T311, 350-352 (QLD), and F390. E392 contacts Mg(2+).

This sequence belongs to the class-II aminoacyl-tRNA synthetase family. Phe-tRNA synthetase alpha subunit type 2 subfamily. Tetramer of two alpha and two beta subunits. Mg(2+) is required as a cofactor.

The protein resides in the cytoplasm. The catalysed reaction is tRNA(Phe) + L-phenylalanine + ATP = L-phenylalanyl-tRNA(Phe) + AMP + diphosphate + H(+). This Saccharolobus solfataricus (strain ATCC 35092 / DSM 1617 / JCM 11322 / P2) (Sulfolobus solfataricus) protein is Phenylalanine--tRNA ligase alpha subunit.